The sequence spans 930 residues: RNA-binding protein 10 (930 aa).

Composition is skewed to basic and acidic residues over residues 1–14 and 21–45; these read MEYERRGGRGDRTG and RSQDDSGENRSRDHDYRDMDYRSYP. The interval 1–127 is disordered; the sequence is MEYERRGGRG…EDEEEEEEKA (127 aa). The segment covering 59-70 has biased composition (acidic residues); it reads DSSEEQSAEDSY. Ser61 and Ser89 each carry phosphoserine. Residues 80-89 are compositionally biased toward basic residues; that stretch reads RRRRRRHRHS. Basic and acidic residues predominate over residues 98–111; the sequence is RDGDYRDQDYRTEQ. The span at 112-125 shows a compositional bias: acidic residues; it reads GEEEEEEDEEEEEE. Positions 129–209 constitute an RRM 1 domain; sequence NIVMLRMLPQ…QKVSMHYSDP (81 aa). The RanBP2-type zinc-finger motif lies at 212 to 242; it reads KINEDWLCNKCGVQNFKRREKCFKCGVPKSE. Residues 300-384 form the RRM 2 domain; the sequence is DTIILRNLNP…KTINVEFAKG (85 aa). N6-acetyllysine is present on Lys383. 5 disordered regions span residues 464 to 487, 503 to 522, 537 to 566, 620 to 646, and 712 to 753; these read GPGMTGTKGDPAGTGPEASLEAGA, APGLYQQSAEGSSGQSTATN, ELQSPTQPSSSAFPPATSPTAPEAYSQYPV, EQSADGHKDTGASSKEGKEKKEKHKTK, and DLPK…EEKL. Positions 507–522 are enriched in polar residues; the sequence is YQQSAEGSSGQSTATN. Residues 540–562 show a composition bias toward low complexity; it reads SPTQPSSSAFPPATSPTAPEAYS. Positions 623 to 639 are enriched in basic and acidic residues; it reads ADGHKDTGASSKEGKEK. 5 positions are modified to phosphoserine: Ser718, Ser723, Ser733, Ser736, and Ser738. Basic and acidic residues predominate over residues 743-753; sequence ERGGPEREEKL. The C2H2-type; atypical zinc-finger motif lies at 759–784; the sequence is LACLLCRRQFPSKEALIRHQQLSGLH. Phosphoserine occurs at positions 781, 797, and 845. Positions 818–861 are disordered; the sequence is AAERREKYGIPEPPEPKRRKYGGISTASVDFEQPTRDGLGSDNI. The G-patch domain occupies 858–904; sequence SDNIGSRMLQAMGWKEGSGLGRKKQGIVTPIEAQTRVRGSGLGARGS. Residue Arg902 is modified to Omega-N-methylarginine.

In terms of assembly, associates with the spliceosome. Component of a large chromatin remodeling complex, at least composed of MYSM1, PCAF, RBM10 and KIF11/TRIP5.

Its subcellular location is the nucleus. Binds to ssRNA containing the consensus sequence 5'-AGGUAA-3'. May be involved in post-transcriptional processing, most probably in mRNA splicing. Binds to RNA homopolymers, with a preference for poly(G) and poly(U) and little for poly(A). May bind to specific miRNA hairpins. The polypeptide is RNA-binding protein 10 (Mus musculus (Mouse)).